The chain runs to 668 residues: Fructose-1,6-bisphosphatase class 3 (668 aa).

It belongs to the FBPase class 3 family. Requires Mn(2+) as cofactor.

The catalysed reaction is beta-D-fructose 1,6-bisphosphate + H2O = beta-D-fructose 6-phosphate + phosphate. It participates in carbohydrate biosynthesis; gluconeogenesis. The polypeptide is Fructose-1,6-bisphosphatase class 3 (Clostridium botulinum (strain Okra / Type B1)).